Consider the following 95-residue polypeptide: Co-chaperonin GroES (95 aa).

This sequence belongs to the GroES chaperonin family. Heptamer of 7 subunits arranged in a ring. Interacts with the chaperonin GroEL.

It is found in the cytoplasm. Functionally, together with the chaperonin GroEL, plays an essential role in assisting protein folding. The GroEL-GroES system forms a nano-cage that allows encapsulation of the non-native substrate proteins and provides a physical environment optimized to promote and accelerate protein folding. GroES binds to the apical surface of the GroEL ring, thereby capping the opening of the GroEL channel. This chain is Co-chaperonin GroES, found in Streptococcus uberis (strain ATCC BAA-854 / 0140J).